The primary structure comprises 180 residues: tRNA (cytidine(56)-2'-O)-methyltransferase (180 aa).

Residues L84 and 112 to 116 contribute to the S-adenosyl-L-methionine site; that span reads GAEKV.

The protein belongs to the aTrm56 family. In terms of assembly, homodimer.

Its subcellular location is the cytoplasm. It carries out the reaction cytidine(56) in tRNA + S-adenosyl-L-methionine = 2'-O-methylcytidine(56) in tRNA + S-adenosyl-L-homocysteine + H(+). Specifically catalyzes the AdoMet-dependent 2'-O-ribose methylation of cytidine at position 56 in tRNAs. This Natronomonas pharaonis (strain ATCC 35678 / DSM 2160 / CIP 103997 / JCM 8858 / NBRC 14720 / NCIMB 2260 / Gabara) (Halobacterium pharaonis) protein is tRNA (cytidine(56)-2'-O)-methyltransferase.